A 50-amino-acid chain; its full sequence is Fungus-induced protein 3 (50 aa).

The polypeptide is Fungus-induced protein 3 (fip-3) (Caenorhabditis elegans).